We begin with the raw amino-acid sequence, 180 residues long: Ribulose bisphosphate carboxylase small subunit, chloroplastic 2 (180 aa).

A chloroplast-targeting transit peptide spans 1–54 (MASMMSNAAVVGRTTPAQASMVAPFTGLKSVSAFPVTKKSNDITSIASNGGRVQ).

It belongs to the RuBisCO small chain family. Heterohexadecamer of 8 large and 8 small subunits.

It is found in the plastid. Its subcellular location is the chloroplast. RuBisCO catalyzes two reactions: the carboxylation of D-ribulose 1,5-bisphosphate, the primary event in carbon dioxide fixation, as well as the oxidative fragmentation of the pentose substrate. Both reactions occur simultaneously and in competition at the same active site. Although the small subunit is not catalytic it is essential for maximal activity. The chain is Ribulose bisphosphate carboxylase small subunit, chloroplastic 2 from Mesembryanthemum crystallinum (Common ice plant).